Here is a 486-residue protein sequence, read N- to C-terminus: Probable glucan endo-1,3-beta-glucosidase eglC (486 aa).

The N-terminal stretch at 1–18 (MQLTQLLALALSLATSEA) is a signal peptide. N-linked (GlcNAc...) asparagine glycosylation occurs at asparagine 84. Catalysis depends on glutamate 128, which acts as the Proton donor. Asparagine 183 carries an N-linked (GlcNAc...) asparagine glycan. Glutamate 239 functions as the Nucleophile in the catalytic mechanism. N-linked (GlcNAc...) asparagine glycosylation is found at asparagine 315, asparagine 386, asparagine 396, and asparagine 404. Residues 330 to 458 (AAAGGVAGGS…SSGAASPSST (129 aa)) are disordered. Composition is skewed to low complexity over residues 341-404 (GSAS…HGSN) and 413-424 (SVSNVSPSKSSS). Polar residues predominate over residues 430-442 (AATSMGASPSSVG). Low complexity predominate over residues 445–458 (GPSKSSGAASPSST). Glycine 463 carries the GPI-anchor amidated glycine lipid modification. Residues 464 to 486 (AATSVSAPVVHVVLLALMMVIAA) constitute a propeptide, removed in mature form.

It belongs to the glycosyl hydrolase 17 family. In terms of processing, the GPI-anchor is attached to the protein in the endoplasmic reticulum and serves to target the protein to the cell surface. There, the glucosamine-inositol phospholipid moiety is cleaved off and the GPI-modified mannoprotein is covalently attached via its lipidless GPI glycan remnant to the 1,6-beta-glucan of the outer cell wall layer.

The protein resides in the cell membrane. It localises to the secreted. Its subcellular location is the cell wall. The catalysed reaction is Hydrolysis of (1-&gt;3)-beta-D-glucosidic linkages in (1-&gt;3)-beta-D-glucans.. Its function is as follows. Glucanases play a role in cell expansion during growth, in cell-cell fusion during mating, and in spore release during sporulation. This enzyme may be involved in beta-glucan degradation and also function biosynthetically as a transglycosylase. The chain is Probable glucan endo-1,3-beta-glucosidase eglC (eglC) from Aspergillus terreus (strain NIH 2624 / FGSC A1156).